Here is a 491-residue protein sequence, read N- to C-terminus: Glutamyl-tRNA(Gln) amidotransferase subunit A (491 aa).

Catalysis depends on charge relay system residues Lys-79 and Ser-158. Catalysis depends on Ser-182, which acts as the Acyl-ester intermediate.

Belongs to the amidase family. GatA subfamily. Heterotrimer of A, B and C subunits.

It catalyses the reaction L-glutamyl-tRNA(Gln) + L-glutamine + ATP + H2O = L-glutaminyl-tRNA(Gln) + L-glutamate + ADP + phosphate + H(+). Allows the formation of correctly charged Gln-tRNA(Gln) through the transamidation of misacylated Glu-tRNA(Gln) in organisms which lack glutaminyl-tRNA synthetase. The reaction takes place in the presence of glutamine and ATP through an activated gamma-phospho-Glu-tRNA(Gln). This Maricaulis maris (strain MCS10) (Caulobacter maris) protein is Glutamyl-tRNA(Gln) amidotransferase subunit A.